A 164-amino-acid chain; its full sequence is Interleukin-36 beta (164 aa).

Residues 1–4 (MNPQ) constitute a propeptide that is removed on maturation.

The protein belongs to the IL-1 family. Interacts with cargo receptor TMED10; the interaction mediates the translocation from the cytoplasm into the ERGIC (endoplasmic reticulum-Golgi intermediate compartment) and thereby secretion. In terms of processing, N-terminal truncation leads to a dramatic enhancement of its activity (&gt;1000-fold). As to expression, expression at low levels in tonsil, bone marrow, heart, placenta, lung, testis and colon but not in any hematopoietic cell lines. Not detected in adipose tissue. Expressed at higher levels in psoriatic plaques than in symptomless psoriatic skin or healthy control skin. Increased levels are not detected in inflamed joint tissue.

The protein localises to the cytoplasm. It localises to the secreted. Functionally, cytokine that binds to and signals through the IL1RL2/IL-36R receptor which in turn activates NF-kappa-B and MAPK signaling pathways in target cells linked to a pro-inflammatory response. Part of the IL-36 signaling system that is thought to be present in epithelial barriers and to take part in local inflammatory response; similar to the IL-1 system with which it shares the coreceptor IL1RAP. Stimulates production of interleukin-6 and interleukin-8 in synovial fibrobasts, articular chondrocytes and mature adipocytes. Induces expression of a number of antimicrobial peptides including beta-defensins 4 and 103 as well as a number of matrix metalloproteases. Seems to be involved in skin inflammatory response by acting on keratinocytes, dendritic cells and indirectly on T-cells to drive tissue infiltration, cell maturation and cell proliferation. In cultured keratinocytes induces the expression of macrophage, T-cell, and neutrophil chemokines, such as CCL3, CCL4, CCL5, CCL2, CCL17, CCL22, CL20, CCL5, CCL2, CCL17, CCL22, CXCL8, CCL20 and CXCL1, and the production of pro-inflammatory cytokines such as TNF-alpha, IL-8 and IL-6. The polypeptide is Interleukin-36 beta (Homo sapiens (Human)).